Here is a 294-residue protein sequence, read N- to C-terminus: ATP synthase gamma chain (294 aa).

Belongs to the ATPase gamma chain family. In terms of assembly, F-type ATPases have 2 components, CF(1) - the catalytic core - and CF(0) - the membrane proton channel. CF(1) has five subunits: alpha(3), beta(3), gamma(1), delta(1), epsilon(1). CF(0) has three main subunits: a, b and c.

Its subcellular location is the cell inner membrane. In terms of biological role, produces ATP from ADP in the presence of a proton gradient across the membrane. The gamma chain is believed to be important in regulating ATPase activity and the flow of protons through the CF(0) complex. This is ATP synthase gamma chain from Campylobacter lari (strain RM2100 / D67 / ATCC BAA-1060).